The chain runs to 384 residues: Ceramide very long chain fatty acid hydroxylase SCS7 (384 aa).

At 1–197 (MSTNTSKTLE…NFLEPLTKTA (197 aa)) the chain is on the cytoplasmic side. A Cytochrome b5 heme-binding domain is found at 9-90 (LELFSKKTVQ…EDEYLIGYLA (82 aa)). Residues H45 and H72 each coordinate heme. A helical transmembrane segment spans residues 198 to 216 (WWVVPVAWLPVVVYHMGVA). Over 217-221 (LKNMN) the chain is Lumenal. Residues 222–246 (QLFACFLFCVGVFVWTLIEYGLHRF) traverse the membrane as a helical segment. The Zn(2+) site is built by H244, H249, H268, H271, and H272. The Cytoplasmic segment spans residues 247–284 (LFHFDDWLPESNIAFATHFLLHGCHHYLPMDKYRLVMP). The helical transmembrane segment at 285–302 (PTLFVILCAPFYKLVFAL) threads the bilayer. Residues 303–304 (LP) lie on the Lumenal side of the membrane. Residues 305–328 (LYWAYAGFAGGLFGYVCYDECHFF) form a helical membrane-spanning segment. H326, H330, H345, H348, and H349 together coordinate Zn(2+). Residues 329-384 (LHHSKLPPFMRKLKKYHLEHHYKNYQLGFGVTSWFWDEVFGTYLGPDAPLSKMKYE) are Cytoplasmic-facing.

It belongs to the sterol desaturase family. SCS7 subfamily. Zn(2+) is required as a cofactor.

The protein resides in the endoplasmic reticulum membrane. It catalyses the reaction an N-(1,2 saturated acyl)-(4R)-hydroxysphinganine + 2 Fe(II)-[cytochrome b5] + O2 + 2 H(+) = an N-(2R-hydroxyacyl)-4R-hydroxysphinganine + 2 Fe(III)-[cytochrome b5] + H2O. The catalysed reaction is an N-(1,2-saturated acyl)sphinganine + 2 Fe(II)-[cytochrome b5] + O2 + 2 H(+) = an N-[(2'R)-hydroxyacyl]sphinganine + 2 Fe(III)-[cytochrome b5] + H2O. The enzyme catalyses N-hexacosanoyl-(4R)-hydroxysphinganine + 2 Fe(II)-[cytochrome b5] + O2 + 2 H(+) = N-(2-hydroxyhexacosanyl)-(4R)-hydroxysphinganine + 2 Fe(III)-[cytochrome b5] + H2O. It participates in sphingolipid metabolism. Ceramide hydroxylase involved in the hydroxylation of sphingolipid-associated very long chain fatty acids. Postulated to hydroxylate the very long chain fatty acid of dihydroceramides and phytoceramides at C-2. The sequence is that of Ceramide very long chain fatty acid hydroxylase SCS7 from Saccharomyces cerevisiae (strain ATCC 204508 / S288c) (Baker's yeast).